Here is a 328-residue protein sequence, read N- to C-terminus: Malate dehydrogenase (328 aa).

11 to 17 contributes to the NAD(+) binding site; the sequence is GAAGQIG. 2 residues coordinate substrate: Arg92 and Arg98. Residues Asn105, Gln112, and 129–131 contribute to the NAD(+) site; that span reads VGN. 2 residues coordinate substrate: Asn131 and Arg162. The Proton acceptor role is filled by His187.

This sequence belongs to the LDH/MDH superfamily. MDH type 2 family.

The enzyme catalyses (S)-malate + NAD(+) = oxaloacetate + NADH + H(+). Its function is as follows. Catalyzes the reversible oxidation of malate to oxaloacetate. This is Malate dehydrogenase from Coxiella burnetii (strain CbuG_Q212) (Coxiella burnetii (strain Q212)).